Reading from the N-terminus, the 189-residue chain is Putative manganese efflux pump MntP (189 aa).

Transmembrane regions (helical) follow at residues 6–26 (IFGIAVALAMDAFAVSIAAGV), 39–59 (LAWHFGLFQALMPIVGWYAGL), 71–91 (WIAFFLLAFVSFNMIRESFDA), 106–126 (LVLLSIATSIDALAVGLSLSV), 131–151 (VWMPATVIGITAAVFTVGGLM), and 169–189 (VGAGVLLFIGLRILYAHGVFY).

This sequence belongs to the MntP (TC 9.B.29) family.

Its subcellular location is the cell inner membrane. In terms of biological role, probably functions as a manganese efflux pump. This Desulfosudis oleivorans (strain DSM 6200 / JCM 39069 / Hxd3) (Desulfococcus oleovorans) protein is Putative manganese efflux pump MntP.